Here is a 232-residue protein sequence, read N- to C-terminus: MDDNKPKSNTFTDEGRLPQVEFAIKNVSRAGTIIGYVCSDGVVLMGVNKEPTNGPMEKIYQLSDSIYCVLCGLFGDAMELKRYARIKAQEVLERFGVECPLTTLCKFVGQRKQAFTQYAGTRPFGVSFLYAGVIDGKYALMSTDPSGTSNRWKGMCYGENEEAINRGLKNDFPEDEMDMKTATVEILRLLGKARELGPKEADRLEILHFSKDCKKYLPCDEVLKLLEEIHAK.

The protein belongs to the peptidase T1A family. In terms of assembly, the 26S proteasome consists of a 20S proteasome core and two 19S regulatory subunits. The 20S proteasome core is composed of 28 subunits that are arranged in four stacked rings, resulting in a barrel-shaped structure. The two end rings are each formed by seven alpha subunits, and the two central rings are each formed by seven beta subunits. The catalytic chamber with the active sites is on the inside of the barrel.

The protein resides in the cytoplasm. Its subcellular location is the nucleus. The proteasome degrades poly-ubiquitinated proteins in the cytoplasm and in the nucleus. It is essential for the regulated turnover of proteins and for the removal of misfolded proteins. The proteasome is a multicatalytic proteinase complex that is characterized by its ability to cleave peptides with Arg, Phe, Tyr, Leu, and Glu adjacent to the leaving group at neutral or slightly basic pH. It has an ATP-dependent proteolytic activity. This is Probable proteasome subunit alpha type-3 (PRE9) from Encephalitozoon cuniculi (strain GB-M1) (Microsporidian parasite).